The primary structure comprises 387 residues: Sharpin (387 aa).

The interval 1–180 (MAPPAGGAAA…EREELAGSLA (180 aa)) is self-association. Over residues 122–132 (EGQNGSKSNSP) the composition is skewed to polar residues. Residues 122–169 (EGQNGSKSNSPPALGPEACPVSLPSPPEASTLKGPPPEADLPRSPGNL) are disordered. At Ser165 the chain carries Phosphoserine. The segment at 175-310 (LAGSLARAIA…SAPREAPATG (136 aa)) is interaction with SHANK1. The Ubiquitin-like domain maps to 219-288 (IRLQVTLEDA…PERSLASYGV (70 aa)). The tract at residues 305-349 (EAPATGPSPQHPQKMDGELGRLFPPSLGLPPGPQPAASSLPSPLQ) is disordered. Ser312 is subject to Phosphoserine. Residues 339–349 (PAASSLPSPLQ) are compositionally biased toward low complexity. The RanBP2-type zinc finger occupies 348–377 (LQPSWSCPSCTFINAPDRPGCEMCSTQRPC).

As to quaternary structure, monomer and homodimer. Component of the LUBAC complex (linear ubiquitin chain assembly complex) which consists of SHARPIN, RBCK1 and RNF31. LUBAC has a MW of approximately 600 kDa suggesting a heteromultimeric assembly of its subunits. Associates with the TNF-R1 signaling complex (TNF-RSC) in a stimulation-dependent manner. Interacts with EYA1, EYA2, SHANK1 and SHANK3 (via ANK repeats). In terms of tissue distribution, highly expressed in skeletal muscle and placenta and at lower levels in brain, heart, colon without mucosa, thymus, spleen, kidney, liver, small intestine, lung and peripheral blood leukocytes. Up-regulated in various tumor tissues such as kidney, liver, ovary and pancreas tumors.

Its subcellular location is the cytoplasm. It is found in the cytosol. It localises to the synapse. Its pathway is protein modification; protein ubiquitination. Its function is as follows. Component of the LUBAC complex which conjugates linear polyubiquitin chains in a head-to-tail manner to substrates and plays a key role in NF-kappa-B activation and regulation of inflammation. LUBAC conjugates linear polyubiquitin to IKBKG and RIPK1 and is involved in activation of the canonical NF-kappa-B and the JNK signaling pathways. Linear ubiquitination mediated by the LUBAC complex interferes with TNF-induced cell death and thereby prevents inflammation. LUBAC is recruited to the TNF-R1 signaling complex (TNF-RSC) following polyubiquitination of TNF-RSC components by BIRC2 and/or BIRC3 and to conjugate linear polyubiquitin to IKBKG and possibly other components contributing to the stability of the complex. The LUBAC complex is also involved in innate immunity by conjugating linear polyubiquitin chains at the surface of bacteria invading the cytosol to form the ubiquitin coat surrounding bacteria. LUBAC is not able to initiate formation of the bacterial ubiquitin coat, and can only promote formation of linear polyubiquitins on pre-existing ubiquitin. The bacterial ubiquitin coat acts as an 'eat-me' signal for xenophagy and promotes NF-kappa-B activation. Together with OTULIN, the LUBAC complex regulates the canonical Wnt signaling during angiogenesis. The protein is Sharpin of Homo sapiens (Human).